The following is a 582-amino-acid chain: BTB/POZ domain and ankyrin repeat-containing protein NPR1 (582 aa).

Residues 1–12 (MEPPTSHVTNAF) show a composition bias toward polar residues. The tract at residues 1–27 (MEPPTSHVTNAFSDSDSASVEEGDADA) is disordered. The BTB domain occupies 55–140 (ADARIAVPGG…VLDYLYSGRV (86 aa)). A C2HC NPR-type zinc finger spans residues 147–161 (ACLCVDEDCAHVGCH). Residues C150, C155, H157, and C160 each contribute to the Zn(2+) site. 4 ANK repeats span residues 229-258 (RSNL…SLGL), 269-299 (KHVR…NLDD), 301-328 (FALH…DVNH), and 332-361 (RGYT…RPAD). A salicylic acid-binding core (SBC) region spans residues 391 to 526 (PSPKDRLCIE…VLDKIMDDET (136 aa)). Residue R436 coordinates salicylate. 2 disordered regions span residues 525–544 (ETDP…KRFH) and 551–582 (QKAF…RPRR). Residues 553–563 (AFHEDKEENDR) show a composition bias toward basic and acidic residues. Positions 564–574 (SGLSSSSSSTS) are enriched in low complexity.

It belongs to the plant 'ANKYRIN-BTB/POZ' family. 'NPR1-like' subfamily. In terms of assembly, oligomer in an uninduced state; disulfide-linked. Forms activated monomer upon changes in cellular redox potential. Interacts with TGA2.2. Interacts with NRR.

The protein localises to the cytoplasm. It is found in the nucleus. Its subcellular location is the nuclear body. The protein operates within protein modification; protein ubiquitination. Functionally, salicylic acid (SA)-binding substrate-specific adapter of an E3 ubiquitin-protein ligase complex (CUL3-RBX1-BTB) which mediates the ubiquitination and subsequent proteasomal degradation of target proteins. Transcription cofactor that represses gene expression in the absence of salicylic acid (SA), when attached to negative cis-elements (W-box) with WRKY transcription factors, but stimulates gene expression upon activation by SA, when sumoylated and attached to positive cis-elements (as-1) with TGA transcription factors, thus confering immunity through a series of gene regulations ending in a significant increase in antimicrobial and defense genes expression. Key positive factor of disease resistance. Involved in defense response against the bacterial blight disease caused by Xanthomonas oryzae pv. oryzae (Xoo). Plants over-expressing NPR1/NH1 acquire high levels of resistance to Xoo, express constitutively defense genes and develop lesion-mimic spots on leaves at pre-flowering stage. Involved in basal resistance to the blast pathogen Magnaporthe oryzae. Plants over-expressing NPR1/NH1 have increased resistance to M.oryzae infection. Plays an essential role in benzothiadiazole (BTH)-induced resistance to the blast fungus disease caused by Magnaporthe oryzae. Functions as a transcriptional coactivator of TGA2.1 and LG2 in vitro. Involved in defense response against herbivore. Plants silencing NPR1/NH1 have increased herbivore-induced trypsin proteinase inhibitors and volatiles, which reduces the performance of the striped stem borer (SSB) Chilo suppressalis. The chain is BTB/POZ domain and ankyrin repeat-containing protein NPR1 from Oryza sativa subsp. indica (Rice).